We begin with the raw amino-acid sequence, 1089 residues long: WD repeat-containing protein on Y chromosome (1089 aa).

WD repeat units lie at residues 155 to 199, 207 to 249, 329 to 368, 372 to 411, 462 to 501, 514 to 553, and 601 to 641; these read EEVA…IRTA, PHAV…RGPF, RIPLGVTTFFVAESHNIVVTGGPDTFVRIWDVYIPTEPSA, GHNGGIVMVFVQPEENKVYSVDYQKIIKVWNLQEHTLLQT, THAAPVSVVLYNRLFRNIVTCGLDSYIIVWDPWTGRRKII, TIDIEITAACFDPLEQFLLTGARDGSLKIWNYNNAVVIRN, and FHTD…RRYS. The segment at 661–684 is disordered; it reads KRSKRWASRAPHSGSHMMSHTGSH. The span at 672-684 shows a compositional bias: low complexity; it reads HSGSHMMSHTGSH. WD repeat units follow at residues 767 to 806 and 850 to 889; these read KTGDCVLTMATDRKNRFLFTGTAFGYIKVWYIVNYCIPEA and GHLKAINSISFINLPKIIITGSHDYSCRLWTQGGRYLGTL. The interval 1049–1089 is disordered; that stretch reads LNIKLPSRRRSDRTNDPRNMRTAKTRGDMGLGHRSSHTSQN.

This chain is WD repeat-containing protein on Y chromosome, found in Drosophila willistoni (Fruit fly).